Consider the following 71-residue polypeptide: MSYYRRRLSPIKPGEPIDYKDVDLLRKFITERGKILPRRITGLTAKQQRELTLAIKRSRLVALLPFINAEG.

Belongs to the bacterial ribosomal protein bS18 family. As to quaternary structure, part of the 30S ribosomal subunit. Forms a tight heterodimer with protein bS6.

Its function is as follows. Binds as a heterodimer with protein bS6 to the central domain of the 16S rRNA, where it helps stabilize the platform of the 30S subunit. In Nostoc sp. (strain PCC 7120 / SAG 25.82 / UTEX 2576), this protein is Small ribosomal subunit protein bS18.